The sequence spans 663 residues: DNA ligase (663 aa).

NAD(+)-binding positions include 33-37, 82-83, and Glu113; these read DQEFD and SL. Catalysis depends on Lys115, which acts as the N6-AMP-lysine intermediate. Arg136, Glu170, Lys286, and Lys310 together coordinate NAD(+). Positions 404, 407, 422, and 427 each coordinate Zn(2+). A BRCT domain is found at 587 to 663; that stretch reads SSDPSLTGKL…IEESDLEDFL (77 aa).

The protein belongs to the NAD-dependent DNA ligase family. LigA subfamily. Mg(2+) serves as cofactor. It depends on Mn(2+) as a cofactor.

The enzyme catalyses NAD(+) + (deoxyribonucleotide)n-3'-hydroxyl + 5'-phospho-(deoxyribonucleotide)m = (deoxyribonucleotide)n+m + AMP + beta-nicotinamide D-nucleotide.. In terms of biological role, DNA ligase that catalyzes the formation of phosphodiester linkages between 5'-phosphoryl and 3'-hydroxyl groups in double-stranded DNA using NAD as a coenzyme and as the energy source for the reaction. It is essential for DNA replication and repair of damaged DNA. In Natranaerobius thermophilus (strain ATCC BAA-1301 / DSM 18059 / JW/NM-WN-LF), this protein is DNA ligase.